Here is a 212-residue protein sequence, read N- to C-terminus: FMN-dependent NADH:quinone oxidoreductase 1 (212 aa).

FMN is bound by residues serine 10, 16–18 (SHS), 97–100 (MYNF), and 145–148 (SRGG).

The protein belongs to the azoreductase type 1 family. In terms of assembly, homodimer. The cofactor is FMN.

The enzyme catalyses 2 a quinone + NADH + H(+) = 2 a 1,4-benzosemiquinone + NAD(+). It catalyses the reaction N,N-dimethyl-1,4-phenylenediamine + anthranilate + 2 NAD(+) = 2-(4-dimethylaminophenyl)diazenylbenzoate + 2 NADH + 2 H(+). In terms of biological role, quinone reductase that provides resistance to thiol-specific stress caused by electrophilic quinones. Functionally, also exhibits azoreductase activity. Catalyzes the reductive cleavage of the azo bond in aromatic azo compounds to the corresponding amines. This is FMN-dependent NADH:quinone oxidoreductase 1 from Pseudomonas fluorescens (strain Pf0-1).